A 199-amino-acid chain; its full sequence is GTP cyclohydrolase-2 (199 aa).

Residue 52 to 56 coordinates GTP; it reads RMHSE. Positions 57, 68, and 70 each coordinate Zn(2+). GTP is bound by residues Gln73, 94–96, and Thr116; that span reads EGR. Asp128 functions as the Proton acceptor in the catalytic mechanism. Arg130 functions as the Nucleophile in the catalytic mechanism. Residues Thr151 and Lys156 each contribute to the GTP site.

The protein belongs to the GTP cyclohydrolase II family. It depends on Zn(2+) as a cofactor.

It catalyses the reaction GTP + 4 H2O = 2,5-diamino-6-hydroxy-4-(5-phosphoribosylamino)-pyrimidine + formate + 2 phosphate + 3 H(+). It functions in the pathway cofactor biosynthesis; riboflavin biosynthesis; 5-amino-6-(D-ribitylamino)uracil from GTP: step 1/4. Functionally, catalyzes the conversion of GTP to 2,5-diamino-6-ribosylamino-4(3H)-pyrimidinone 5'-phosphate (DARP), formate and pyrophosphate. The protein is GTP cyclohydrolase-2 of Aliivibrio fischeri (strain ATCC 700601 / ES114) (Vibrio fischeri).